A 183-amino-acid polypeptide reads, in one-letter code: Nucleoplasmin-like protein NO29 (183 aa).

The segment covering 126–166 has biased composition (acidic residues); it reads SDDEDLSGSEEEMEDEEEEEDDDDDDDDDDDDDDDDDEEEI. Positions 126–183 are disordered; it reads SDDEDLSGSEEEMEDEEEEEDDDDDDDDDDDDDDDDDEEEITPIKPAKKPLKTLSRTF.

The protein belongs to the nucleoplasmin family.

The protein resides in the nucleus. The protein localises to the nucleolus. This chain is Nucleoplasmin-like protein NO29, found in Xenopus laevis (African clawed frog).